The chain runs to 714 residues: Protein HAPLESS 2-B (714 aa).

An N-terminal signal peptide occupies residues 1–33; sequence MAPRRRRRAARSSRPLLLALLAAAVNNFAPAGG. Residues 34–552 are Extracellular-facing; it reads VEVLAKSRLE…FFTGTTCSTR (519 aa). 7 cysteine pairs are disulfide-bonded: Cys-45–Cys-59, Cys-134–Cys-164, Cys-146–Cys-194, Cys-165–Cys-321, Cys-167–Cys-177, Cys-304–Cys-328, and Cys-441–Cys-479. Residues 553 to 573 form a helical membrane-spanning segment; sequence CWSFLKFVIHGLLLVAVLWLL. At 574 to 714 the chain is on the cytoplasmic side; that stretch reads HRKGLFDPLY…HGDRRHHAWH (141 aa). Residues 597-619 are disordered; that stretch reads RARRRHKRAHSHRHSHHHDAHKR. Basic residues predominate over residues 598 to 619; sequence ARRRHKRAHSHRHSHHHDAHKR.

Belongs to the HAP2/GCS1 family.

The protein localises to the endoplasmic reticulum membrane. The protein resides in the cell membrane. Functionally, required for male fertility. Plays a role in pollen tube guidance and successful gamete attachment. Essential for the fusion of gametes during double fertilization, where one male gamete fuses with the egg to produce a zygote, and another male gamete fuses with the central cell to produce the endosperm. Mediates the fusion of cell membranes. Not required for pollen tube outgrowth. The polypeptide is Protein HAPLESS 2-B (HAP2B) (Oryza sativa subsp. japonica (Rice)).